Reading from the N-terminus, the 144-residue chain is Nucleoside diphosphate kinase (144 aa).

K9, F57, R85, T91, R102, and N112 together coordinate ATP. H120 acts as the Pros-phosphohistidine intermediate in catalysis.

It belongs to the NDK family. Homotetramer. Requires Mg(2+) as cofactor.

Its subcellular location is the cytoplasm. It catalyses the reaction a 2'-deoxyribonucleoside 5'-diphosphate + ATP = a 2'-deoxyribonucleoside 5'-triphosphate + ADP. The enzyme catalyses a ribonucleoside 5'-diphosphate + ATP = a ribonucleoside 5'-triphosphate + ADP. In terms of biological role, major role in the synthesis of nucleoside triphosphates other than ATP. The ATP gamma phosphate is transferred to the NDP beta phosphate via a ping-pong mechanism, using a phosphorylated active-site intermediate. This is Nucleoside diphosphate kinase from Streptococcus uberis (strain ATCC BAA-854 / 0140J).